The sequence spans 284 residues: ATP phosphoribosyltransferase (284 aa).

It belongs to the ATP phosphoribosyltransferase family. Long subfamily. The cofactor is Mg(2+).

It is found in the cytoplasm. The catalysed reaction is 1-(5-phospho-beta-D-ribosyl)-ATP + diphosphate = 5-phospho-alpha-D-ribose 1-diphosphate + ATP. The protein operates within amino-acid biosynthesis; L-histidine biosynthesis; L-histidine from 5-phospho-alpha-D-ribose 1-diphosphate: step 1/9. Its activity is regulated as follows. Feedback inhibited by histidine. Catalyzes the condensation of ATP and 5-phosphoribose 1-diphosphate to form N'-(5'-phosphoribosyl)-ATP (PR-ATP). Has a crucial role in the pathway because the rate of histidine biosynthesis seems to be controlled primarily by regulation of HisG enzymatic activity. This Corynebacterium kroppenstedtii (strain DSM 44385 / JCM 11950 / CIP 105744 / CCUG 35717) protein is ATP phosphoribosyltransferase.